The chain runs to 366 residues: Isopropyl malate dehydrogenase htyC (366 aa).

71 to 73 (VGG) contributes to the NADP(+) binding site. Residues Arg91 and Arg130 each coordinate substrate. Residues Asp221, Asp246, and Asp250 each contribute to the Mg(2+) site. 277 to 282 (GCVHGI) serves as a coordination point for NADP(+).

It belongs to the isocitrate and isopropylmalate dehydrogenases family. Homodimer. Mg(2+) serves as cofactor. The cofactor is Mn(2+).

The enzyme catalyses (2R,3S)-3-isopropylmalate + NAD(+) = 4-methyl-2-oxopentanoate + CO2 + NADH. The protein operates within antifungal biosynthesis. Isopropyl malate dehydrogenase; part of the gene cluster that mediates the de novo generation of L-homotyrosine from acetyl-CoA and 4-hydroxyphenyl-pyruvate. L-homotyrosine is a building block of echinocandin B, a fungal lipidated cyclic hexapeptide that acts as an antifungal agent. L-homotyrosine 4-hydroxyphenyl-pyruvate first undergoes an aldol-type condensation by htyA with the C-2 of acetyl-CoA followed by the release of CoA to form 2-(4-hydroxybenzyl)-malate. This is followed by isomerization of 2-(4-hydroxy-benzyl)-malate to 3-(4-hydroxybenzyl)-malate by htyD. Thereafter, 3-(4-hydroxybenzyl)-malate undergoes decarboxylation and oxidation to form 2-oxo-4-(4-hydroxybenzyl)butanoic acid, coupled to reduction of NAD(+) to NADH by htyC. The product then undergoes transamination catalyzed by htyB to form L-homotyrosine. This is Isopropyl malate dehydrogenase htyC from Aspergillus rugulosus (Emericella rugulosa).